Consider the following 101-residue polypeptide: Signal recognition particle 19 kDa protein (101 aa).

This sequence belongs to the SRP19 family. As to quaternary structure, part of the signal recognition particle protein translocation system, which is composed of SRP and FtsY. Archaeal SRP consists of a 7S RNA molecule of 300 nucleotides and two protein subunits: SRP54 and SRP19.

It localises to the cytoplasm. In terms of biological role, involved in targeting and insertion of nascent membrane proteins into the cytoplasmic membrane. Binds directly to 7S RNA and mediates binding of the 54 kDa subunit of the SRP. The polypeptide is Signal recognition particle 19 kDa protein (Methanosarcina mazei (strain ATCC BAA-159 / DSM 3647 / Goe1 / Go1 / JCM 11833 / OCM 88) (Methanosarcina frisia)).